The primary structure comprises 75 residues: DNA-directed RNA polymerase subunit omega (75 aa).

This sequence belongs to the RNA polymerase subunit omega family. In terms of assembly, in cyanobacteria the RNAP catalytic core is composed of 2 alpha, 1 beta, 1 beta', 1 gamma and 1 omega subunit. When a sigma factor is associated with the core the holoenzyme is formed, which can initiate transcription.

The catalysed reaction is RNA(n) + a ribonucleoside 5'-triphosphate = RNA(n+1) + diphosphate. In terms of biological role, promotes RNA polymerase assembly. Latches the N- and C-terminal regions of the beta' subunit thereby facilitating its interaction with the beta and alpha subunits. The chain is DNA-directed RNA polymerase subunit omega from Synechococcus sp. (strain CC9311).